Consider the following 322-residue polypeptide: MATRNRTLLFRKYRNSLRSVRAPLSSSSLTGTRSGGVGPVIEMASTSLLNPNRSYAPISTEDPGTSSKGAITVGLPPAWVDVSEEISVNIQRARTKMAELGKAHAKALMPSFGDGKEDQHNIESLTQEITFLLKKSEKQLQRLSASGPSEDSNVRKNVQRSLATDLQLLSMELRKKQSTYLKRLRQQKEDGMDLEMNLSRNRYRPEEDDFGDMLNEHQMSKIKKSEEVSVEREKEIQQVVESVNDLAQIMKDLSALVIDQGTIVDRIDYNIENVATTVEDGLKQLQKAERTQRHGGMVKCASVLVILCFIMLLLLILKEIFL.

Residues 1–301 (MATRNRTLLF…QRHGGMVKCA (301 aa)) lie on the Cytoplasmic side of the membrane. Residues 116-146 (KEDQHNIESLTQEITFLLKKSEKQLQRLSAS) are a coiled coil. One can recognise a t-SNARE coiled-coil homology domain in the interval 226 to 288 (EEVSVEREKE…EDGLKQLQKA (63 aa)). The chain crosses the membrane as a helical; Anchor for type IV membrane protein span at residues 302-322 (SVLVILCFIMLLLLILKEIFL).

The protein belongs to the syntaxin family. In terms of assembly, interacts with VTI12 and SYP61 to form a t-SNARE complex and with VPS45. Interacts with TNO1. Binds to YKT61 and YKT62. Core constituent of the SNARE complex required for membrane fusion at the trans-Golgi network. In terms of tissue distribution, mostly expressed in flowers, to a lower extent in leaves and roots, and, at low levels, in stems.

It localises to the golgi apparatus. The protein resides in the trans-Golgi network membrane. In terms of biological role, contributes to the regulation of secretory and vacuolar transport pathways in the post-Golgi network, and to the maintenance of the Golgi apparatus and trans-Golgi network (TGN) morphologies. Together with VTI12, required for membrane fusion. Vesicle trafficking protein that functions in the secretory pathway and mediates liposome fusion; the fusion of phospholipid vesicles containing SYP41 and VTI12 is triggered by YKT61 and YKT62. Required for extracellular resistance responses to a fungal pathogen. Also involved in the protection of chloroplasts from salicylic acid-dependent biotic stress. This Arabidopsis thaliana (Mouse-ear cress) protein is Tlg2p-like protein a.